The primary structure comprises 504 residues: Anaerobic nitric oxide reductase transcription regulator NorR (504 aa).

Asp-57 is subject to 4-aspartylphosphate. The Sigma-54 factor interaction domain maps to 187-416 (MIGLSPGMTQ…LEHAIHRAVV (230 aa)). ATP is bound by residues 215-222 (GETGTGKE) and 278-287 (ADNGTLFLDE). The H-T-H motif DNA-binding region spans 479 to 498 (WAACARMLETDVANLHRLAK).

Its pathway is nitrogen metabolism; nitric oxide reduction. Functionally, required for the expression of anaerobic nitric oxide (NO) reductase, acts as a transcriptional activator for at least the norVW operon. Activation also requires sigma-54. This chain is Anaerobic nitric oxide reductase transcription regulator NorR, found in Shigella sonnei (strain Ss046).